The chain runs to 266 residues: Ras-like protein family member 12 (266 aa).

GTP-binding positions include 27-34 (GRRGAGKS), 74-78 (DTADL), and 134-137 (NKLD).

This sequence belongs to the small GTPase superfamily. Ras family.

It catalyses the reaction GTP + H2O = GDP + phosphate + H(+). The chain is Ras-like protein family member 12 (RASL12) from Bos taurus (Bovine).